A 277-amino-acid polypeptide reads, in one-letter code: Diaminopimelate epimerase (277 aa).

3 residues coordinate substrate: N15, Q48, and N66. Catalysis depends on C75, which acts as the Proton donor. Residues 76–77 (GN), N156, N189, and 207–208 (ER) each bind substrate. C216 (proton acceptor) is an active-site residue. Position 217–218 (217–218 (GS)) interacts with substrate.

It belongs to the diaminopimelate epimerase family. As to quaternary structure, homodimer.

It is found in the cytoplasm. It catalyses the reaction (2S,6S)-2,6-diaminopimelate = meso-2,6-diaminopimelate. Its pathway is amino-acid biosynthesis; L-lysine biosynthesis via DAP pathway; DL-2,6-diaminopimelate from LL-2,6-diaminopimelate: step 1/1. Catalyzes the stereoinversion of LL-2,6-diaminopimelate (L,L-DAP) to meso-diaminopimelate (meso-DAP), a precursor of L-lysine and an essential component of the bacterial peptidoglycan. The protein is Diaminopimelate epimerase of Acidiphilium cryptum (strain JF-5).